Reading from the N-terminus, the 1367-residue chain is MAP3K epsilon protein kinase 2 (1367 aa).

The Protein kinase domain occupies 20-274 (YMLGDEIGKG…AKTLLSHPWI (255 aa)). HEAT repeat units follow at residues 25-62 (EIGK…EDLN) and 86-125 (LKTK…TVYI). ATP contacts are provided by residues 26 to 34 (IGKGAYGRV) and lysine 49. The Proton acceptor role is filled by aspartate 144. Residues 218 to 256 (PYYDLQPMPALYRIVQDDTPPIPDSLSPDITDFLRLCFK) form an HEAT 3 repeat. 2 disordered regions span residues 285–422 (LRHS…GRRN) and 437–513 (SSHS…VADG). Residues 293-306 (YMKETDSSSEKDAE) are compositionally biased toward basic and acidic residues. The span at 351–363 (LGEEGTDSEDDIN) shows a compositional bias: acidic residues. A compositionally biased stretch (polar residues) spans 378-396 (RQSGTCSISSDAKGTSQDV). 2 stretches are compositionally biased toward basic and acidic residues: residues 397–408 (LENHEKYDRDEI) and 475–491 (SLHD…EGKT). A compositionally biased stretch (polar residues) spans 492–507 (NEASTSTPTANVNQGD). HEAT repeat units follow at residues 538 to 576 (SQDG…LFPL), 577 to 614 (QAVE…RPGQ), 633 to 658 (IPKS…DFLE), 659 to 700 (NACL…SSPL), and 704 to 742 (MFIS…VFKL). The tract at residues 792–860 (PRARSGQLDP…LHPDGDRPRL (69 aa)) is disordered. 2 stretches are compositionally biased toward polar residues: residues 799-814 (LDPN…TSPS) and 835-845 (ALTSNSQSSDV). Positions 846-859 (HQPDALHPDGDRPR) are enriched in basic and acidic residues. HEAT repeat units follow at residues 850 to 888 (ALHP…STDK), 906 to 943 (DQVR…HESR), 1045 to 1066 (DYLE…TVKS), 1067 to 1105 (YMCS…DPNC), 1112 to 1150 (ADAI…INKR), 1154 to 1191 (QAAE…ASRN), 1196 to 1236 (LRAH…KVEQ), 1257 to 1280 (RHFV…NKTL), 1281 to 1317 (ALNG…KHPK), and 1347 to 1367 (QVLV…NTIL).

The protein belongs to the protein kinase superfamily. Ser/Thr protein kinase family. In terms of processing, autophosphorylated. Expressed in both the sporophytic and the gametophytic tissues, especially in dividing cells. Mostly present in flower buds and mature flowers. Also accumulates in embryos and in roots.

The protein resides in the cytoplasm. It is found in the cytoskeleton. Its subcellular location is the microtubule organizing center. The protein localises to the nucleus. It localises to the nucleolus. The protein resides in the cell membrane. It catalyses the reaction L-seryl-[protein] + ATP = O-phospho-L-seryl-[protein] + ADP + H(+). The enzyme catalyses L-threonyl-[protein] + ATP = O-phospho-L-threonyl-[protein] + ADP + H(+). Its function is as follows. Serine/threonine-protein kinase involved in the spatial and temporal control system organizing cortical activities in mitotic and postmitotic cells. Required for the normal functioning of the plasma membrane in developing pollen. Involved in the regulation of cell expansion and embryo development. This is MAP3K epsilon protein kinase 2 from Arabidopsis thaliana (Mouse-ear cress).